Here is a 340-residue protein sequence, read N- to C-terminus: Phosphoribosylformylglycinamidine cyclo-ligase (340 aa).

Belongs to the AIR synthase family.

Its subcellular location is the cytoplasm. It catalyses the reaction 2-formamido-N(1)-(5-O-phospho-beta-D-ribosyl)acetamidine + ATP = 5-amino-1-(5-phospho-beta-D-ribosyl)imidazole + ADP + phosphate + H(+). It participates in purine metabolism; IMP biosynthesis via de novo pathway; 5-amino-1-(5-phospho-D-ribosyl)imidazole from N(2)-formyl-N(1)-(5-phospho-D-ribosyl)glycinamide: step 2/2. The sequence is that of Phosphoribosylformylglycinamidine cyclo-ligase from Streptococcus mutans serotype c (strain ATCC 700610 / UA159).